The following is a 165-amino-acid chain: SsrA-binding protein (165 aa).

Positions 141 to 165 (KLHDKRENEKRKQSEREVKSALARY) are disordered. The span at 144-159 (DKRENEKRKQSEREVK) shows a compositional bias: basic and acidic residues.

Belongs to the SmpB family.

The protein localises to the cytoplasm. In terms of biological role, required for rescue of stalled ribosomes mediated by trans-translation. Binds to transfer-messenger RNA (tmRNA), required for stable association of tmRNA with ribosomes. tmRNA and SmpB together mimic tRNA shape, replacing the anticodon stem-loop with SmpB. tmRNA is encoded by the ssrA gene; the 2 termini fold to resemble tRNA(Ala) and it encodes a 'tag peptide', a short internal open reading frame. During trans-translation Ala-aminoacylated tmRNA acts like a tRNA, entering the A-site of stalled ribosomes, displacing the stalled mRNA. The ribosome then switches to translate the ORF on the tmRNA; the nascent peptide is terminated with the 'tag peptide' encoded by the tmRNA and targeted for degradation. The ribosome is freed to recommence translation, which seems to be the essential function of trans-translation. The polypeptide is SsrA-binding protein (Prochlorococcus marinus (strain SARG / CCMP1375 / SS120)).